A 390-amino-acid polypeptide reads, in one-letter code: Dual-specificity RNA methyltransferase RlmN (390 aa).

The active-site Proton acceptor is the glutamate 126. One can recognise a Radical SAM core domain in the interval 134 to 374; the sequence is TEDRGAVCLS…APVRTPRGQD (241 aa). The cysteines at positions 141 and 379 are disulfide-linked. Cysteine 148, cysteine 152, and cysteine 155 together coordinate [4Fe-4S] cluster. S-adenosyl-L-methionine is bound by residues 205 to 206, serine 237, 259 to 261, and asparagine 336; these read GE and SLH. Cysteine 379 serves as the catalytic S-methylcysteine intermediate.

Belongs to the radical SAM superfamily. RlmN family. Requires [4Fe-4S] cluster as cofactor.

It is found in the cytoplasm. The catalysed reaction is adenosine(2503) in 23S rRNA + 2 reduced [2Fe-2S]-[ferredoxin] + 2 S-adenosyl-L-methionine = 2-methyladenosine(2503) in 23S rRNA + 5'-deoxyadenosine + L-methionine + 2 oxidized [2Fe-2S]-[ferredoxin] + S-adenosyl-L-homocysteine. It carries out the reaction adenosine(37) in tRNA + 2 reduced [2Fe-2S]-[ferredoxin] + 2 S-adenosyl-L-methionine = 2-methyladenosine(37) in tRNA + 5'-deoxyadenosine + L-methionine + 2 oxidized [2Fe-2S]-[ferredoxin] + S-adenosyl-L-homocysteine. Specifically methylates position 2 of adenine 2503 in 23S rRNA and position 2 of adenine 37 in tRNAs. m2A2503 modification seems to play a crucial role in the proofreading step occurring at the peptidyl transferase center and thus would serve to optimize ribosomal fidelity. This Acidiphilium cryptum (strain JF-5) protein is Dual-specificity RNA methyltransferase RlmN.